We begin with the raw amino-acid sequence, 311 residues long: CD-NTase-associated protein 6 (311 aa).

ATP-binding positions include 84 to 89 (GSGKTE) and 215 to 216 (RR).

Belongs to the AAA ATPase family. In terms of assembly, homohexamer. Forms a 1:1:6 CdnC:Cap7:Cap6 complex.

Its function is as follows. Regulates complex assembly in a CBASS antivirus system. CBASS (cyclic oligonucleotide-based antiphage signaling system) provides immunity against bacteriophage. The CD-NTase protein synthesizes cyclic nucleotides in response to infection; these serve as specific second messenger signals. The signals activate a diverse range of effectors, leading to bacterial cell death and thus abortive phage infection. A type III-C(AAA) CBASS system. Binds and disassembles an active CdnC:Cap7 (Cap7 is also called HORMA) complex, inhibiting the complex's ability to synthesize cyclic nucleotide second messengers. An AAA+-ATPase remodeler, in the absence of foreign threat Cap6 (also called Trip13) probably maintains the Cap7 protein in its open, inactive state. Once activated (presumably by a bacteriophage protein) Cap7 binds to and activates its cognate CD-NTase (CdnC in this bacteria) to synthesize cAAA, a cyclic nucleotide second messenger. cAAA activates the NucC endonuclease which degrades all DNA in the infected cell, causing cell death and abortive phage infection. In terms of biological role, protects E.coli strain JP313 against bacteriophage lambda cI- infection. When the cdnC-cap7-cap6-nucC operon is transformed into a susceptible E.coli strain it confers bacteriophage lambda cI- immunity. Mutations in the sensor (Cap7 also called HORMA) or effector proteins (CdnC, NucC) but not the disassembly protein (Cap6 also called Trip13) no longer confer immunity. The presence of the intact operon leads to culture collapse and cell death, which occurs before the phage has finished its replication cycle, thus protecting non-infected bacteria by aborting the phage infection and preventing its propagation. The sequence is that of CD-NTase-associated protein 6 from Escherichia coli (strain MS 115-1).